The chain runs to 497 residues: Cytochrome P450 2D6 (497 aa).

Position 301 (Asp301) interacts with substrate. Cys443 provides a ligand contact to heme.

This sequence belongs to the cytochrome P450 family. Requires heme as cofactor.

Its subcellular location is the endoplasmic reticulum membrane. The protein localises to the microsome membrane. The enzyme catalyses (5Z,8Z,11Z,14Z)-eicosatetraenoate + reduced [NADPH--hemoprotein reductase] + O2 = (8R,9S)-epoxy-(5Z,11Z,14Z)-eicosatrienoate + oxidized [NADPH--hemoprotein reductase] + H2O + H(+). The catalysed reaction is (5Z,8Z,11Z,14Z)-eicosatetraenoate + reduced [NADPH--hemoprotein reductase] + O2 = (11R,12S)-epoxy-(5Z,8Z,14Z)-eicosatrienoate + oxidized [NADPH--hemoprotein reductase] + H2O + H(+). It catalyses the reaction (5Z,8Z,11Z,14Z)-eicosatetraenoate + reduced [NADPH--hemoprotein reductase] + O2 = (14S,15R)-epoxy-(5Z,8Z,11Z)-eicosatrienoate + oxidized [NADPH--hemoprotein reductase] + H2O + H(+). It carries out the reaction N-(5Z,8Z,11Z,14Z-eicosatetraenoyl)-ethanolamine + reduced [NADPH--hemoprotein reductase] + O2 = N-(8,9-epoxy-5Z,11Z,14Z-eicosatrienoyl)-ethanolamine + oxidized [NADPH--hemoprotein reductase] + H2O + H(+). The enzyme catalyses N-(5Z,8Z,11Z,14Z-eicosatetraenoyl)-ethanolamine + reduced [NADPH--hemoprotein reductase] + O2 = N-(11,12-epoxy-5Z,8Z,14Z-eicosatrienoyl)-ethanolamine + oxidized [NADPH--hemoprotein reductase] + H2O + H(+). The catalysed reaction is N-(5Z,8Z,11Z,14Z-eicosatetraenoyl)-ethanolamine + reduced [NADPH--hemoprotein reductase] + O2 = N-(14,15-epoxy-5Z,8Z,11Z-eicosatrienoyl)-ethanolamine + oxidized [NADPH--hemoprotein reductase] + H2O + H(+). It catalyses the reaction N-(5Z,8Z,11Z,14Z-eicosatetraenoyl)-ethanolamine + reduced [NADPH--hemoprotein reductase] + O2 = N-(20-hydroxy-5Z,8Z,11Z,14Z-eicosatetraenoyl)-ethanolamine + oxidized [NADPH--hemoprotein reductase] + H2O + H(+). It carries out the reaction (5Z,8Z,11Z,14Z,17Z)-eicosapentaenoate + reduced [NADPH--hemoprotein reductase] + O2 = (17S,18R)-epoxy-(5Z,8Z,11Z,14Z)-eicosatetraenoate + oxidized [NADPH--hemoprotein reductase] + H2O + H(+). The enzyme catalyses (4Z,7Z,10Z,13Z,16Z,19Z)-docosahexaenoate + reduced [NADPH--hemoprotein reductase] + O2 = (19R,20S)-epoxy-(4Z,7Z,10Z,13Z,16Z)-docosapentaenoate + oxidized [NADPH--hemoprotein reductase] + H2O + H(+). The catalysed reaction is (4Z,7Z,10Z,13Z,16Z,19Z)-docosahexaenoate + reduced [NADPH--hemoprotein reductase] + O2 = (19S,20R)-epoxy-(4Z,7Z,10Z,13Z,16Z)-docosapentaenoate + oxidized [NADPH--hemoprotein reductase] + H2O + H(+). It catalyses the reaction cholesterol + reduced [NADPH--hemoprotein reductase] + O2 = 25-hydroxycholesterol + oxidized [NADPH--hemoprotein reductase] + H2O + H(+). It carries out the reaction all-trans-retinol + reduced [NADPH--hemoprotein reductase] + O2 = all-trans-retinal + oxidized [NADPH--hemoprotein reductase] + 2 H2O + H(+). It functions in the pathway cofactor metabolism; retinol metabolism. The protein operates within lipid metabolism; fatty acid metabolism. It participates in steroid metabolism; cholesterol metabolism. A cytochrome P450 monooxygenase involved in the metabolism of fatty acids, steroids and retinoids. Mechanistically, uses molecular oxygen inserting one oxygen atom into a substrate, and reducing the second into a water molecule, with two electrons provided by NADPH via cytochrome P450 reductase (NADPH--hemoprotein reductase). Catalyzes the epoxidation of double bonds of polyunsaturated fatty acids (PUFA). Metabolizes endocannabinoid arachidonoylethanolamide (anandamide) to 20-hydroxyeicosatetraenoic acid ethanolamide (20-HETE-EA) and 8,9-, 11,12-, and 14,15-epoxyeicosatrienoic acid ethanolamides (EpETrE-EAs), potentially modulating endocannabinoid system signaling. Catalyzes the hydroxylation of carbon-hydrogen bonds. Metabolizes cholesterol toward 25-hydroxycholesterol, a physiological regulator of cellular cholesterol homeostasis. Catalyzes the oxidative transformations of all-trans retinol to all-trans retinal, a precursor for the active form all-trans-retinoic acid. Also involved in the oxidative metabolism of drugs such as antiarrhythmics, adrenoceptor antagonists, and tricyclic antidepressants. The protein is Cytochrome P450 2D6 (CYP2D6) of Pan troglodytes (Chimpanzee).